Consider the following 487-residue polypeptide: Glutamyl-tRNA(Gln) amidotransferase subunit A (487 aa).

Catalysis depends on charge relay system residues Lys79 and Ser158. Ser182 (acyl-ester intermediate) is an active-site residue.

Belongs to the amidase family. GatA subfamily. In terms of assembly, heterotrimer of A, B and C subunits.

The enzyme catalyses L-glutamyl-tRNA(Gln) + L-glutamine + ATP + H2O = L-glutaminyl-tRNA(Gln) + L-glutamate + ADP + phosphate + H(+). Allows the formation of correctly charged Gln-tRNA(Gln) through the transamidation of misacylated Glu-tRNA(Gln) in organisms which lack glutaminyl-tRNA synthetase. The reaction takes place in the presence of glutamine and ATP through an activated gamma-phospho-Glu-tRNA(Gln). The protein is Glutamyl-tRNA(Gln) amidotransferase subunit A of Ehrlichia ruminantium (strain Gardel).